The chain runs to 384 residues: Guanine nucleotide-binding protein alpha-1 subunit (384 aa).

A disordered region spans residues 1–22 (MGSLCSRNKHYSQADDEENTQT). Residue glycine 2 is the site of N-myristoyl glycine attachment. The S-palmitoyl cysteine moiety is linked to residue cysteine 5. The region spanning 38-384 (HIQKLLLLGA…RRNLFEAGLL (347 aa)) is the G-alpha domain. Residues 41-54 (KLLLLGAGDSGKST) form a G1 motif region. GTP-binding residues include aspartate 49, serine 50, glycine 51, lysine 52, serine 53, threonine 54, aspartate 163, leucine 188, threonine 194, glycine 222, asparagine 288, lysine 289, aspartate 291, and alanine 356. Serine 53 contributes to the Mg(2+) binding site. Residues 186–194 (DVLFARIRT) form a G2 motif region. Threonine 194 is a binding site for Mg(2+). Residues 215–224 (YRLFDVGGQR) form a G3 motif region. The interval 284–291 (MLFLNKFD) is G4 motif. The interval 354–359 (TTALDQ) is G5 motif.

Belongs to the G-alpha family. As to quaternary structure, g proteins are composed of 3 units; alpha, beta and gamma. The alpha chain contains the guanine nucleotide binding site. Mg(2+) is required as a cofactor.

Functionally, guanine nucleotide-binding proteins (G proteins) are involved as modulators or transducers in various transmembrane signaling systems. In Solanum lycopersicum (Tomato), this protein is Guanine nucleotide-binding protein alpha-1 subunit (GPA1).